Here is a 383-residue protein sequence, read N- to C-terminus: Delta(12) acyl-lipid conjugase (11E,13E-forming) (383 aa).

Residues 1–30 form a disordered region; sequence MGEVGPTNRTKTKLDKQQESENRVPHEPPP. The span at 12–26 shows a compositional bias: basic and acidic residues; sequence TKLDKQQESENRVPH. A run of 2 helical transmembrane segments spans residues 56 to 76 and 84 to 104; these read VIHD…YIPM and VAWP…LVLG. The short motif at 105-109 is the Histidine box-1 element; sequence HECGH. Positions 141–145 match the Histidine box-2 motif; it reads HRRHH. 3 consecutive transmembrane segments (helical) span residues 179 to 199, 225 to 245, and 249 to 269; these read FLMI…FNAN, VIAS…IALA, and VWLI…IVLI. Residues 315–319 carry the Histidine box-3 motif; that stretch reads HLVHH.

Belongs to the fatty acid desaturase type 1 family. As to expression, expressed in developing seeds, but not in leaves.

Its subcellular location is the membrane. The enzyme catalyses a (9Z,12Z)-octadecadienoyl-containing glycerolipid + 2 Fe(II)-[cytochrome b5] + O2 + 2 H(+) = a (9Z,11E,13E)-octadecatrienoyl-containing glycerolipid + 2 Fe(III)-[cytochrome b5] + 2 H2O. It carries out the reaction (9Z,12Z,15Z)-octadecatrienoyl-containing glycerolipid + 2 Fe(II)-[cytochrome b5] + O2 + 2 H(+) = a (9Z,11E,13E,15Z)-octadecatetraenoyl-containing glycerolipid + 2 Fe(III)-[cytochrome b5] + 2 H2O. It functions in the pathway lipid metabolism; polyunsaturated fatty acid biosynthesis. Converts linoleic acid to alpha-eleostearic acid (18:3(9Z,11E,13E)) and alpha-linolenic acid to alpha-parinaric acid (18:4(9Z,11E, 13E, 15Z)). Converts a single cis double bond at carbon 12 to two conjugated trans bonds at positions 11 and 13. This Impatiens balsamina (Balsam) protein is Delta(12) acyl-lipid conjugase (11E,13E-forming).